A 537-amino-acid polypeptide reads, in one-letter code: Tyrosine-protein kinase fyna (537 aa).

Glycine 2 carries N-myristoyl glycine lipidation. S-palmitoyl cysteine attachment occurs at residues cysteine 3 and cysteine 6. Threonine 12 bears the Phosphothreonine; by PKC mark. A disordered region spans residues 13–34 (KLTDERETSVSQHAGYRYGSDP). Residues 82–143 (TGVTLFVALY…PSNYVAPVDS (62 aa)) enclose the SH3 domain. One can recognise an SH2 domain in the interval 149–246 (WYFGKLGRKD…GLCCRLIVPC (98 aa)). The 254-residue stretch at 271–524 (LQLIKRLGNG…YLQAFLEDYF (254 aa)) folds into the Protein kinase domain. ATP-binding positions include 277 to 285 (LGNGQFGEV) and lysine 299. Residue aspartate 390 is the Proton acceptor of the active site. Tyrosine 420 is modified (phosphotyrosine; by autocatalysis). The residue at position 531 (tyrosine 531) is a Phosphotyrosine.

It belongs to the protein kinase superfamily. Tyr protein kinase family. SRC subfamily. Mn(2+) serves as cofactor. In terms of tissue distribution, widely expressed.

It localises to the cytoplasm. It is found in the nucleus. It carries out the reaction L-tyrosyl-[protein] + ATP = O-phospho-L-tyrosyl-[protein] + ADP + H(+). With respect to regulation, inhibited by phosphorylation of Tyr-531 by leukocyte common antigen and activated by dephosphorylation of this site. Relatively inactive in the unfertilized oocyte, undergoes rapid activation immediately following fertilization. Total activity increases progressively during later development and remains elevated during sphere and epiboly stage. Its function is as follows. Tyrosine-protein kinase implicated in the control of cell growth. Plays a role in the regulation of intracellular calcium levels. Required in brain development and mature brain function with important roles in the regulation of axon growth, axon guidance, and neurite extension. Role in cntn1-mediated signaling. Required for convergent extension cell movements during gastrulation, acting with yes via rhoa. May be required for epiboly to occur, possibly through its effects in calcium signaling. The protein is Tyrosine-protein kinase fyna (fyna) of Danio rerio (Zebrafish).